The chain runs to 1001 residues: ATP-dependent DNA/RNA helicase DHX36 (1001 aa).

A required for recruitment to cytoplasmic stress granules region spans residues 1 to 44 (MSYDYHQSWSRDGGPRGSGQGSSGGGGGGSRGSGGGGGGRGGRG). The disordered stretch occupies residues 1–54 (MSYDYHQSWSRDGGPRGSGQGSSGGGGGGSRGSGGGGGGRGGRGRHPAHLKGRE). The segment at 1–97 (MSYDYHQSWS…IVQLLNSVQA (97 aa)) is required for the pre-miR-134 transport. The segment at 1 to 193 (MSYDYHQSWS…KKTDPRYIEM (193 aa)) is necessary for nuclear and nucleolar caps localizations. Residues 15 to 41 (PRGSGQGSSGGGGGGSRGSGGGGGGRG) are compositionally biased toward gly residues. Positions 46–68 (HPAHLKGREIGLWYAKKQTQKNK) are DSM (DHX36-specific motif). The required for G4-DNA- and G4-RNA-binding stretch occupies residues 46–98 (HPAHLKGREIGLWYAKKQTQKNKEAERQERAVVHMDERREEQIVQLLNSVQAK). RecA-like domain stretches follow at residues 99–379 (TDKD…MIHI) and 380–621 (PGFT…DYQL). Residues 120 to 147 (EVSSEKKINSEKKLDNQEKKLLNQEKKT) are a coiled coil. Phosphoserine is present on S154. Residues 210–380 (VNLINNHQVT…FGNCPMIHIP (171 aa)) form the Helicase ATP-binding domain. 226–231 (GCGKTT) contributes to the ATP binding site. The interval 258–310 (RRISAISVAERVATERAESCGNGNSTGYQIRLQSRLPRKQGSILYCTTGIILQ) is necessary for interaction with single-stranded DNA at the 3'-end of the G4-DNA structure. The short motif at 327 to 330 (DEIH) is the DEAH box element. Mg(2+)-binding residues include E328 and H330. Residues 470-640 (ALIRYIVLEE…ELCLQIKILR (171 aa)) enclose the Helicase C-terminal domain. The interval 491–550 (WDNISTLHDLLMSQVMFKSDKFLIIPLHSLMPTVNQTQVFKKTPPGVRKIVIATNIAETS) is necessary for interaction with single-stranded DNA at the 3'-end of the G4-DNA structure. Residues 510-521 (DKFLIIPLHSLM) carry the Nuclear localization signal motif. ATP contacts are provided by residues S550 and 595–598 (RAGR). The tract at residues 622–691 (PEILRTPLEE…LGVHLARLPV (70 aa)) is WH domain. Necessary for interaction with single-stranded DNA at the 3'-end of the G4-DNA structure regions lie at residues 631–690 (ELCL…ARLP), 842–853 (NLGKKRKMVKVH), and 863–893 (HPKS…IYLY). Residues 834–898 (PKVAKIRLNL…SIYLYDCTEV (65 aa)) are OB-fold-like subdomains. An N6-acetyllysine modification is found at K940. S956 is modified (phosphoserine).

It belongs to the DEAD box helicase family. DEAH subfamily. Found in a multi-helicase-TICAM1 complex at least composed of DHX36, DDX1, DDX21 and TICAM1; this complex exists in resting cells with or without dsRNA poly(I:C) ligand stimulation. Interacts (via C-terminus) with TICAM1 (via TIR domain). Interacts (via C-terminus) with DDX21; this interaction serves as bridges to TICAM1. Interacts with TERT; this interaction is dependent on the ability of DHX36 to bind to the G-quadruplex RNA (G4-RNA) structure present in the telomerase RNA template component (TERC). Interacts with DKC1; this interaction is dependent on the ability of DHX36 to bind to the G4-RNA structure present in TERC. Interacts with PARN; this interaction stimulates PARN to enhance uPA mRNA decay. Interacts with EXOSC3; this interaction occurs in a RNase-insensitive manner. Interacts with EXOSC10; this interaction occurs in a RNase-insensitive manner. Interacts with ILF3; this interaction occurs in a RNA-dependent manner. Interacts with ELAVL1; this interaction occurs in an RNA-dependent manner. Interacts with DDX5; this interaction occurs in a RNA-dependent manner. Interacts with DDX17; this interaction occurs in a RNA-dependent manner. Interacts with HDAC1; this interaction occurs in a RNA-dependent manner. Interacts with HDAC3; this interaction occurs in a RNA-dependent manner. Interacts with HDAC4. Interacts with AGO1. Interacts with AGO2. Interacts with ERCC6. Mg(2+) serves as cofactor. In terms of tissue distribution, expressed in spermatogonia stem cells and primary spermatocytes (at protein level). Expressed strongly in testis. Weakly expressed in heart, lung, liver, kidney, small intestine, spleen, lymphe node and thymus.

It localises to the nucleus. The protein localises to the cytoplasm. The protein resides in the cytosol. Its subcellular location is the stress granule. It is found in the nucleus speckle. It localises to the chromosome. The protein localises to the telomere. The protein resides in the mitochondrion. Its subcellular location is the perikaryon. It is found in the cell projection. It localises to the dendrite. The protein localises to the axon. It carries out the reaction ATP + H2O = ADP + phosphate + H(+). Its activity is regulated as follows. ATPase activity is enhanced in the presence of homomeric poly(U) RNAs, but not by double-stranded DNA (dsDNA), double-stranded RNA (dsRNA) and tRNA. Multifunctional ATP-dependent helicase that unwinds G-quadruplex (G4) structures. Plays a role in many biological processes such as genomic integrity, gene expression regulations and as a sensor to initiate antiviral responses. G4 structures correspond to helical structures containing guanine tetrads. Binds with high affinity to and unwinds G4 structures that are formed in nucleic acids (G4-DNA and G4-RNA). Plays a role in genomic integrity. Converts the G4-RNA structure present in telomerase RNA template component (TREC) into a double-stranded RNA to promote P1 helix formation that acts as a template boundary ensuring accurate reverse transcription. Plays a role in transcriptional regulation. Resolves G4-DNA structures in promoters of genes, such as YY1, KIT/c-kit and ALPL and positively regulates their expression. Plays a role in post-transcriptional regulation. Unwinds a G4-RNA structure located in the 3'-UTR polyadenylation site of the pre-mRNA TP53 and stimulates TP53 pre-mRNA 3'-end processing in response to ultraviolet (UV)-induced DNA damage. Binds to the precursor-microRNA-134 (pre-miR-134) terminal loop and regulates its transport into the synapto-dendritic compartment. Involved in the pre-miR-134-dependent inhibition of target gene expression and the control of dendritic spine size. Plays a role in the regulation of cytoplasmic mRNA translation and mRNA stability. Binds to both G4-RNA structures and alternative non-quadruplex-forming sequence within the 3'-UTR of the PITX1 mRNA regulating negatively PITX1 protein expression. Binds to both G4-RNA structure in the 5'-UTR and AU-rich elements (AREs) localized in the 3'-UTR of NKX2-5 mRNA to either stimulate protein translation or induce mRNA decay in an ELAVL1-dependent manner, respectively. Also binds to ARE sequences present in several mRNAs mediating exosome-mediated 3'-5' mRNA degradation. Involved in cytoplasmic urokinase-type plasminogen activator (uPA) mRNA decay. Component of a multi-helicase-TICAM1 complex that acts as a cytoplasmic sensor of viral double-stranded RNA (dsRNA) and plays a role in the activation of a cascade of antiviral responses including the induction of pro-inflammatory cytokines via the adapter molecule TICAM1. Required for the early embryonic development and hematopoiesis. Involved in the regulation of cardioblast differentiation and proliferation during heart development. Involved in spermatogonia differentiation. May play a role in ossification. The chain is ATP-dependent DNA/RNA helicase DHX36 from Mus musculus (Mouse).